The primary structure comprises 408 residues: Innexin-12 (408 aa).

A helical membrane pass occupies residues 29–49 (TIGLVLASAFITGWSFVGSPI). N99 carries an N-linked (GlcNAc...) asparagine glycan. 3 helical membrane-spanning segments follow: residues 113-133 (QWVP…VVIW), 197-217 (VITS…FQFV), and 284-304 (IFVA…TNTI).

Belongs to the pannexin family.

Its subcellular location is the cell membrane. The protein resides in the cell junction. It is found in the gap junction. Functionally, structural component of the gap junctions. Plays a role in oocyte directional transit in the spermatheca during ovulation by facilitating the directional propagation of the calcium signal in the spermatheca. Plays a role in male tail tip morphogenesis. This chain is Innexin-12, found in Caenorhabditis elegans.